An 867-amino-acid polypeptide reads, in one-letter code: E3 ubiquitin-protein ligase SH3RF1 (867 aa).

The segment at 12–53 (CPVCLERLDATAKVLPCQHTFCRRCLLGIVGSRGELRCPECR) adopts an RING-type zinc-finger fold. The disordered stretch occupies residues 101–127 (AQGAGGSQRDPGPTGGQSQRVQAKSTP). Over residues 116-125 (GQSQRVQAKS) the composition is skewed to polar residues. SH3 domains are found at residues 132-191 (PQLP…VIKP) and 194-257 (QPPP…FNSA). The interval 265 to 328 (DKPSEGGGDS…PPPQRHSMEI (64 aa)) is disordered. Positions 275–285 (SEGPSSSSSGP) are enriched in low complexity. Residues 436–497 (QRPTVYVAMF…PGNYMSPVSR (62 aa)) form the SH3 3 domain. A disordered region spans residues 706-794 (LSNKKKLRPS…APIAPPPRQP (89 aa)). Residues 760 to 769 (SELSMSSSSS) are compositionally biased toward low complexity. Residues 770-784 (NTDAVTHRSSPQDNT) show a composition bias toward polar residues. In terms of domain architecture, SH3 4 spans 808 to 867 (IVCERYRVVVSYPPQSEAELELKEGDIVFVHKKREDGWFKGTLQRNGRTGLFPGSFVDSI).

Belongs to the SH3RF family. In terms of processing, autoubiquitinated. Ubiquitinated by SH3RF2, leading to proteasome-mediated degradation.

The protein localises to the cytoplasm. Its subcellular location is the perinuclear region. It localises to the cell projection. It is found in the lamellipodium. The protein resides in the golgi apparatus. The protein localises to the trans-Golgi network. The enzyme catalyses S-ubiquitinyl-[E2 ubiquitin-conjugating enzyme]-L-cysteine + [acceptor protein]-L-lysine = [E2 ubiquitin-conjugating enzyme]-L-cysteine + N(6)-ubiquitinyl-[acceptor protein]-L-lysine.. The protein operates within protein modification; protein ubiquitination. Functionally, has E3 ubiquitin-protein ligase activity. In the absence of an external substrate, it can catalyze self-ubiquitination. Acts as a scaffold protein that contributes to the effective activation of the JNK signaling pathway. This chain is E3 ubiquitin-protein ligase SH3RF1 (sh3rf1), found in Danio rerio (Zebrafish).